The following is a 395-amino-acid chain: Protein-arginine rhamnosyltransferase (395 aa).

Residues 19–22 (NYGD), Tyr205, Gln272, and 288–292 (RGEDS) each bind dTDP-beta-L-rhamnose. The active-site Proton acceptor is Asp22. The active site involves Glu290.

This sequence belongs to the glycosyltransferase 104 family.

It carries out the reaction dTDP-beta-L-rhamnose + L-arginyl-[protein] = N(omega)-(alpha-L-rhamnosyl)-L-arginyl-[protein] + dTDP + H(+). Protein-arginine rhamnosyltransferase that catalyzes the transfer of a single rhamnose to elongation factor P (EF-P) on 'Lys-32', a modification required for EF-P-dependent rescue of polyproline stalled ribosomes. The chain is Protein-arginine rhamnosyltransferase from Shewanella oneidensis (strain ATCC 700550 / JCM 31522 / CIP 106686 / LMG 19005 / NCIMB 14063 / MR-1).